The sequence spans 923 residues: MDGSDSLLKSVDVSKLDNGSTISFRAREDGFLESISSSSGKLVDMVLDSTSKECLPKFSFQNKLDFYFLFSDRVLQLQKERKVLVLIHCESLQSFDSFFAQKLKYADLISSDNVHEIFLPDSNAANIRYHWEWSPPSGKLLEYECKNYSCIAVYSTEDCTLERISKFSYYTVSRCGDSMDDTFFSESQRVTSPLTTSQTVQTQPPQSPEAKTELSLINTKTVIFPENYEDGPSFRSMLHELEQKSSLMKYYCKKIMKRIVQLSDAYDASQVAVMKLSETLSEASNSTSMNMDILLDSYLTKAMDIHATFIQKLNYDLINLLYEPFHNIYSSFIKPIDDRRLEFDEQSKSFYGSLSRYLSAKKDKKGGDSKFFQKEKTFALQRYDYYCFMQDLHDGSIINDINGIFLQYFHRQYDHIALFSNLMNSVLPNLQQLNLKLEKTKWSTTRRDKGREMHRSQVIQTSGRPKSMAPPSPSPISPSFPLHEIQSPMPNRRMAASADDISQTSNFTTEIKGKCISNGGSASPDKIFKEGLLLVFGATELGTDLAMVSKAAWHKHWIVVENGSLWEYANWKDSVKSNVSSISLKHASADKVRKQGRRFCFEVVTPKLKRLYQATSAEEMDSWIEAICEAAKISSFQLSRVATPLSASVRRPSKVFPLFSTSFETTPISRKLSGSGIKKAFSRKGSWNLQQFFRSDNSGTMHMEQLERYHASANIFIQMLRKTDVSNSVCADCGSVKDVTWCSINIPVVLCIECSGIHRSLGTHISKTRSLLLDSLSQQSKVLLCKIGNAAVNRVYEKGLSNPSLKPKPEHNAQVKLAFAQKKYVEHAFIDFAGVDADATLLEGLEQNKISKILLGLAAKPNFEENGVVFLKAVTRDTSKLHLLELLFMNGLLLPDSEQLSEHVSPDMQSYLSQKQFTKYLKE.

Residue Ser207 is modified to Phosphoserine. A compositionally biased stretch (basic and acidic residues) spans 444-455; it reads TTRRDKGREMHR. Positions 444–476 are disordered; sequence TTRRDKGREMHRSQVIQTSGRPKSMAPPSPSPI. A PH domain is found at 526–632; that stretch reads KIFKEGLLLV…WIEAICEAAK (107 aa). In terms of domain architecture, Arf-GAP spans 714–837; the sequence is NIFIQMLRKT…AFIDFAGVDA (124 aa). The C4-type zinc finger occupies 730–754; sequence CADCGSVKDVTWCSINIPVVLCIEC.

It localises to the cytoplasm. It is found in the cell tip. Its function is as follows. GTPase-activating protein for the ADP ribosylation factor family. This Schizosaccharomyces pombe (strain 972 / ATCC 24843) (Fission yeast) protein is Probable ribosylation factor GTPase-activating protein cnt6 (cnt6).